The sequence spans 329 residues: Glutamyl-tRNA reductase (329 aa).

Substrate contacts are provided by residues 51–54 (TCLR), serine 99, 104–106 (EDQ), and glutamine 110. Cysteine 52 serves as the catalytic Nucleophile. Position 179 to 184 (179 to 184 (GIGELA)) interacts with NADP(+).

Belongs to the glutamyl-tRNA reductase family. As to quaternary structure, homodimer.

The catalysed reaction is (S)-4-amino-5-oxopentanoate + tRNA(Glu) + NADP(+) = L-glutamyl-tRNA(Glu) + NADPH + H(+). It participates in porphyrin-containing compound metabolism; protoporphyrin-IX biosynthesis; 5-aminolevulinate from L-glutamyl-tRNA(Glu): step 1/2. Catalyzes the NADPH-dependent reduction of glutamyl-tRNA(Glu) to glutamate 1-semialdehyde (GSA). This chain is Glutamyl-tRNA reductase, found in Fusobacterium nucleatum subsp. nucleatum (strain ATCC 25586 / DSM 15643 / BCRC 10681 / CIP 101130 / JCM 8532 / KCTC 2640 / LMG 13131 / VPI 4355).